We begin with the raw amino-acid sequence, 665 residues long: Adenylate cyclase 1 (665 aa).

The segment at 1–25 is disordered; sequence MLQRSESGFKDIESMQDSNADKPSR. Positions 7 to 24 are enriched in basic and acidic residues; the sequence is SGFKDIESMQDSNADKPS. Transmembrane regions (helical) follow at residues 33–53 and 373–393; these read SLLGLVMVAMLIVVSATLVGL and AVSGAVVVVAVLLALVLAHLI. In terms of domain architecture, HAMP spans 394 to 444; sequence TKSLNQLTDSANRLQDLDFATPIDVSSHVAEISTLNGAMNRARDAIFTFAL. One can recognise a Guanylate cyclase domain in the interval 471–603; the sequence is TAMFTDIYDF…DTVNVASRLE (133 aa). Asp476 and Asp520 together coordinate Mg(2+).

Belongs to the adenylyl cyclase class-3 family. Requires Mg(2+) as cofactor.

The protein localises to the cell membrane. The enzyme catalyses ATP = 3',5'-cyclic AMP + diphosphate. Functionally, plays essential roles in regulation of cellular metabolism by catalyzing the synthesis of a second messenger, cAMP. In Rhizobium meliloti (strain 1021) (Ensifer meliloti), this protein is Adenylate cyclase 1 (cya1).